A 513-amino-acid chain; its full sequence is V-type proton ATPase subunit B, kidney isoform (513 aa).

Positions 1–18 (MATTVDSRSSGFTGNSCD) are enriched in polar residues. Residues 1–21 (MATTVDSRSSGFTGNSCDPGT) are disordered. Arginine 394 contributes to the ATP binding site. The short motif at 510-513 (DTAL) is the PDZ-binding element.

The protein belongs to the ATPase alpha/beta chains family. In terms of assembly, V-ATPase is a heteromultimeric enzyme made up of two complexes: the ATP-hydrolytic V1 complex and the proton translocation V0 complex. The V1 complex consists of three catalytic AB heterodimers that form a heterohexamer, three peripheral stalks each consisting of EG heterodimers, one central rotor including subunits D and F, and the regulatory subunits C and H. The proton translocation complex V0 consists of the proton transport subunit a, a ring of proteolipid subunits c9c'', rotary subunit d, subunits e and f, and the accessory subunits ATP6AP1/Ac45 and ATP6AP2/PRR. Forms a complex with NHERF1 and SCL4A7. As to expression, highly expressed in the kidney; found in early distal nephron, encompassing thick ascending limbs and distal convoluted tubules and in the alpha-intercalated cells of the cortical collecting ducts (at protein level). Expressed in the olfactory epithelium (at protein level). Expressed at lower levels in the testis.

Its subcellular location is the apical cell membrane. The protein localises to the basolateral cell membrane. Non-catalytic subunit of the V1 complex of vacuolar(H+)-ATPase (V-ATPase), a multisubunit enzyme composed of a peripheral complex (V1) that hydrolyzes ATP and a membrane integral complex (V0) that translocates protons. V-ATPase is responsible for acidifying and maintaining the pH of intracellular compartments and in some cell types, is targeted to the plasma membrane, where it is responsible for acidifying the extracellular environment. Essential for the proper assembly and activity of V-ATPase. In renal intercalated cells, mediates secretion of protons (H+) into the urine thereby ensuring correct urinary acidification. Required for optimal olfactory function by mediating the acidification of the nasal olfactory epithelium. In Mus musculus (Mouse), this protein is V-type proton ATPase subunit B, kidney isoform (Atp6v1b1).